The chain runs to 481 residues: FAD-linked oxidoreductase afoF (481 aa).

An N-terminal signal peptide occupies residues 1 to 16; it reads MRFLLQSITLVAAARA. In terms of domain architecture, FAD-binding PCMH-type spans 52–227; the sequence is SEWRPPTWTG…TAATFKMFDQ (176 aa). Asparagine 82 is a glycosylation site (N-linked (GlcNAc...) asparagine). Histidine 92 carries the post-translational modification Pros-8alpha-FAD histidine. Residues asparagine 196, asparagine 241, asparagine 276, asparagine 309, asparagine 312, and asparagine 376 are each glycosylated (N-linked (GlcNAc...) asparagine).

Belongs to the oxygen-dependent FAD-linked oxidoreductase family. FAD serves as cofactor.

In terms of biological role, FAD-linked oxidoreductase; part of the gene cluster that mediates the biosynthesis of asperfuranone, a probable antitumor agent. The polyketide synthase afoG is responsible for producing the 3,5-dimethyloctadienone moiety from acetyl-CoA, three malonyl-CoA, and two S-adenosyl methionines (SAM). The 3,5-dimethyloctadienone moiety is then loaded onto the SAT domain of afoE and extended with four malonyl-CoA and one SAM, which leads to the formation of 2,4-dihydroxy-6-(5,7-dimethyl-2-oxo-trans-3-trans-5-nonadienyl)-3-methylbenzaldehyde (compound 2) after reductive release and aldol condensation. AfoD is the next enzyme in the biosynthesis sequence and hydroxylates the side chain at the benzylic position of compound 2. After benzylic hydroxylation, a furan ring is formed after five-member ring hemiacetal formation and water elimination. AfoF and afoC are proposed to oxidize the R-diketone proton and to reduce the unconjugated carbonyl group, respectively, to generate asperfuranone. Since no intermediates could be isolated from afoF and afoC deletants, the sequence of these two enzymes is not fully understood. Moreover, since afoC deletant still produces a small amount of asperfuranone, other endogenous oxidoreductases might catalyze the same reaction with much less efficiency. In Emericella nidulans (strain FGSC A4 / ATCC 38163 / CBS 112.46 / NRRL 194 / M139) (Aspergillus nidulans), this protein is FAD-linked oxidoreductase afoF.